Reading from the N-terminus, the 405-residue chain is Aspartokinase (405 aa).

An ATP-binding site is contributed by 7 to 10 (KYGG). Substrate is bound at residue 25–30 (RIAHYR). Position 41 (S41) interacts with ATP. Substrate-binding positions include 47-49 (TDE), E74, 125-126 (LD), 150-153 (RGGS), and S153. ATP-binding positions include 173-174 (TD), 179-184 (YTTDPH), and R209. ACT domains follow at residues 263 to 342 (IGLI…IAKV) and 344 to 405 (IVGV…LDKA). Residues D270, 274 to 275 (IA), 288 to 290 (AVD), Q294, 355 to 356 (VP), 369 to 370 (NI), and 376 to 377 (SE) each bind substrate.

Belongs to the aspartokinase family. Heterotetramer consisting of 2 isoforms Alpha (catalytic and regulation) and of a homodimer of 2 isoforms Beta (regulation and thermostability).

The catalysed reaction is L-aspartate + ATP = 4-phospho-L-aspartate + ADP. The protein operates within amino-acid biosynthesis; L-lysine biosynthesis via DAP pathway; (S)-tetrahydrodipicolinate from L-aspartate: step 1/4. Its pathway is amino-acid biosynthesis; L-methionine biosynthesis via de novo pathway; L-homoserine from L-aspartate: step 1/3. It participates in amino-acid biosynthesis; L-threonine biosynthesis; L-threonine from L-aspartate: step 1/5. Its activity is regulated as follows. Inhibited by threonine. In terms of biological role, catalyzes the phosphorylation of the beta-carboxyl group of aspartic acid with ATP to yield 4-phospho-L-aspartate, which is involved in the branched biosynthetic pathway leading to the biosynthesis of amino acids threonine, isoleucine and methionine. This is Aspartokinase (ask) from Thermus thermophilus.